The primary structure comprises 122 residues: Large ribosomal subunit protein uL14 (122 aa).

The protein belongs to the universal ribosomal protein uL14 family. In terms of assembly, part of the 50S ribosomal subunit. Forms a cluster with proteins L3 and L19. In the 70S ribosome, L14 and L19 interact and together make contacts with the 16S rRNA in bridges B5 and B8.

Functionally, binds to 23S rRNA. Forms part of two intersubunit bridges in the 70S ribosome. In Gloeothece citriformis (strain PCC 7424) (Cyanothece sp. (strain PCC 7424)), this protein is Large ribosomal subunit protein uL14.